The primary structure comprises 2194 residues: Nucleosome-remodeling factor subunit NURF301-like (2194 aa).

Residues 1–12 (MAPPRGRSKRKH) are compositionally biased toward basic residues. The disordered stretch occupies residues 1-137 (MAPPRGRSKR…EEEESSDDEF (137 aa)). Basic and acidic residues predominate over residues 60-79 (AQRETPSDAEEVEVKIEEIS). A compositionally biased stretch (polar residues) spans 80–93 (VRSTPASTPAPKST). The segment covering 94 to 112 (SKARGRPKKNPTPPRRKSL) has biased composition (basic residues). Over residues 118-137 (DIIYMDEDSEEEEESSDDEF) the composition is skewed to acidic residues. DDT domains follow at residues 196 to 256 (TASI…SDDE) and 341 to 396 (VGKF…SAVR). The PHD-type 1 zinc finger occupies 347 to 392 (DENCRVCGKSSGRVVGCTQCEAAFHVECSHLKPFPEVLVCNICKKN). 5 disordered regions span residues 1091–1122 (ESWL…SLDN), 1158–1255 (AKRK…PQPN), 1413–1433 (TSNF…PVYS), 1657–1701 (MRQE…SNDS), and 1834–1888 (ESIA…HTPG). A coiled-coil region spans residues 1151-1187 (RAEAEKTAKRKLEATRKAQKAKEDEERRRIQQQQQRS). Residues 1158–1179 (AKRKLEATRKAQKAKEDEERRR) show a composition bias toward basic and acidic residues. The span at 1665 to 1684 (TSGYDSSGNPIRSITSSGDT) shows a compositional bias: polar residues. Over residues 1852–1861 (KSEDDRDKPE) the composition is skewed to basic and acidic residues. 2 DDT domains span residues 1883–1953 (AFHT…EQER) and 1948–2014 (IEEQ…AEGY). 2 PHD-type zinc fingers span residues 1899-1950 (IEHC…CIEE) and 1959-2010 (ALYC…CTRE). The region spanning 2030-2134 (QLTRADYTHV…EVFDKKLIDV (105 aa)) is the Bromo domain.

The protein belongs to the BPTF family. As to quaternary structure, part of a nucleosome remodeling factor-like (NURF-like) complex containing nurf-1 and isw-1.

The protein localises to the nucleus. Histone-binding component of a NURF-like (nucleosome remodeling factor-like) complex, which would catalyze ATP-dependent nucleosome sliding and facilitate transcription of chromatin. Involved in vulval cell fates. The polypeptide is Nucleosome-remodeling factor subunit NURF301-like (nurf-1) (Caenorhabditis elegans).